The sequence spans 524 residues: Ankyrin repeat-containing protein At5g02620 (524 aa).

ANK repeat units follow at residues 16-45 (RDDT…GVEL), 55-84 (SGET…SVLA), 90-119 (NGFD…ELSF), 124-153 (SKTT…DLAA), 158-187 (NGKT…GMVT), 192-222 (KGQT…LINS), 226-255 (KGNT…VSRV), and 260-289 (SGET…QNAR). A run of 4 helical transmembrane segments spans residues 349–369 (AINS…AAIF), 399–419 (FLIF…VVVV), 441–461 (LMWM…FVVV), and 472–492 (VTAI…YWVI). Serine 508 bears the Phosphoserine mark.

It localises to the membrane. The protein is Ankyrin repeat-containing protein At5g02620 of Arabidopsis thaliana (Mouse-ear cress).